The primary structure comprises 521 residues: FAD-dependent monooxygenase DEP2 (521 aa).

A signal peptide spans 1–22 (MHDSPPFKVIIVGAGVTGLTLA). The FAD site is built by D36 and R109. N-linked (GlcNAc...) asparagine glycans are attached at residues N139 and N220. FAD-binding residues include D310 and G323. Residues 477 to 497 (ILVLWAGLWLAICFFHLVFSG) form a helical membrane-spanning segment. N515 is a glycosylation site (N-linked (GlcNAc...) asparagine).

Belongs to the paxM FAD-dependent monooxygenase family. Requires FAD as cofactor.

The protein localises to the membrane. It participates in polyketide biosynthesis. Part of the gene cluster that mediates the biosynthesis of depudecin, a highly oxidized eleven-carbon linear polyketide that acts as a histone deacetylase (HDAC) inhibitor and makes a small contribution to pathogenesis. The reducing polyketide synthase DEP5 is the central enzyme in depudecin biosynthesis by yielding the backbone polyketide chain. The monooxygenases DEP2 and DEP4, as well as the uncharacterized protein DEP1, then act as tailoring enzymes to modify the intermediate polyketide chain into depudecin. The chain is FAD-dependent monooxygenase DEP2 from Fusarium langsethiae.